Consider the following 466-residue polypeptide: Sucrose-6-phosphate hydrolase (466 aa).

Substrate is bound by residues 38 to 41 (LMND), glutamine 57, 100 to 101 (YS), 159 to 160 (RD), and glutamate 218. Aspartate 41 is an active-site residue.

The protein belongs to the glycosyl hydrolase 32 family.

The protein resides in the cytoplasm. The catalysed reaction is Hydrolysis of terminal non-reducing beta-D-fructofuranoside residues in beta-D-fructofuranosides.. It functions in the pathway glycan biosynthesis; sucrose metabolism. In terms of biological role, enables the bacterium to metabolize sucrose as a sole carbon source. This Salmonella typhimurium protein is Sucrose-6-phosphate hydrolase (scrB).